A 684-amino-acid polypeptide reads, in one-letter code: Multisite-specific tRNA:(cytosine-C(5))-methyltransferase (684 aa).

Residues 1 to 12 (MARRKNFKKGNK) show a composition bias toward basic residues. The tract at residues 1–24 (MARRKNFKKGNKKTFGARDDSRAQ) is disordered. S-adenosyl-L-methionine is bound by residues 173-179 (CAAPGSK), aspartate 202, aspartate 229, and aspartate 257. The active-site Nucleophile is cysteine 310. Threonine 426 carries the post-translational modification Phosphothreonine. Serine 431 bears the Phosphoserine mark. Positions 650–684 (KATPSAEEKEKEKETTESPAETTTGTSTEAPSAAN) are disordered. Over residues 655–665 (AEEKEKEKETT) the composition is skewed to basic and acidic residues. Over residues 666–684 (ESPAETTTGTSTEAPSAAN) the composition is skewed to low complexity. The residue at position 667 (serine 667) is a Phosphoserine.

The protein belongs to the class I-like SAM-binding methyltransferase superfamily. RsmB/NOP family. TRM4 subfamily.

Its subcellular location is the nucleus. It localises to the nucleolus. The enzyme catalyses cytidine(34) in tRNA precursor + S-adenosyl-L-methionine = 5-methylcytidine(34) in tRNA precursor + S-adenosyl-L-homocysteine + H(+). It catalyses the reaction cytidine(40) in tRNA precursor + S-adenosyl-L-methionine = 5-methylcytidine(40) in tRNA precursor + S-adenosyl-L-homocysteine + H(+). The catalysed reaction is cytidine(48) in tRNA + S-adenosyl-L-methionine = 5-methylcytidine(48) in tRNA + S-adenosyl-L-homocysteine + H(+). It carries out the reaction cytidine(49) in tRNA + S-adenosyl-L-methionine = 5-methylcytidine(49) in tRNA + S-adenosyl-L-homocysteine + H(+). Functionally, methylates cytosine to m5C at several positions in different tRNAs and pre-tRNAs containing intron. Able to modify tRNAs at all four positions (34, 40, 48 and 49) at which m5C has been found in tRNAs. May be involved in ribosome biogenesis as its disruption leads to increased sensitivity to the antibiotic paromomycin. The protein is Multisite-specific tRNA:(cytosine-C(5))-methyltransferase (NCL1) of Saccharomyces cerevisiae (strain ATCC 204508 / S288c) (Baker's yeast).